Consider the following 278-residue polypeptide: Ribosomal RNA small subunit methyltransferase A (278 aa).

Asn-27, Leu-29, Gly-54, Glu-75, Asp-101, and Asn-122 together coordinate S-adenosyl-L-methionine.

Belongs to the class I-like SAM-binding methyltransferase superfamily. rRNA adenine N(6)-methyltransferase family. RsmA subfamily.

It is found in the cytoplasm. It carries out the reaction adenosine(1518)/adenosine(1519) in 16S rRNA + 4 S-adenosyl-L-methionine = N(6)-dimethyladenosine(1518)/N(6)-dimethyladenosine(1519) in 16S rRNA + 4 S-adenosyl-L-homocysteine + 4 H(+). Its function is as follows. Specifically dimethylates two adjacent adenosines (A1518 and A1519) in the loop of a conserved hairpin near the 3'-end of 16S rRNA in the 30S particle. May play a critical role in biogenesis of 30S subunits. This chain is Ribosomal RNA small subunit methyltransferase A, found in Brucella anthropi (strain ATCC 49188 / DSM 6882 / CCUG 24695 / JCM 21032 / LMG 3331 / NBRC 15819 / NCTC 12168 / Alc 37) (Ochrobactrum anthropi).